The following is a 370-amino-acid chain: Phospho-N-acetylmuramoyl-pentapeptide-transferase (370 aa).

The next 10 helical transmembrane spans lie at 24–44 (YLTFRSGMAMLTAYIVAVAMG), 78–98 (TMGGFMILAGLFVAALLWADL), 103–123 (VWVVLLITGSYGLLGFMDDYA), 138–158 (KLVAQFIVAIIATVILILFAP), 177–197 (ALVINLGWFYVAFAAFTIAGF), 209–229 (GLAIVPVMFAASTFGLIAYLV), 245–265 (GVGELAVLCGAIIGGGMGFLW), 273–293 (IFMGDTGSLALGGALGAIAVC), 298–318 (LVLGIVGGLFVAEALSVMIQV), and 347–367 (TVVIRFWIVSMILAFIGLATL).

This sequence belongs to the glycosyltransferase 4 family. MraY subfamily. The cofactor is Mg(2+).

It is found in the cell inner membrane. The catalysed reaction is UDP-N-acetyl-alpha-D-muramoyl-L-alanyl-gamma-D-glutamyl-meso-2,6-diaminopimeloyl-D-alanyl-D-alanine + di-trans,octa-cis-undecaprenyl phosphate = di-trans,octa-cis-undecaprenyl diphospho-N-acetyl-alpha-D-muramoyl-L-alanyl-D-glutamyl-meso-2,6-diaminopimeloyl-D-alanyl-D-alanine + UMP. Its pathway is cell wall biogenesis; peptidoglycan biosynthesis. Its function is as follows. Catalyzes the initial step of the lipid cycle reactions in the biosynthesis of the cell wall peptidoglycan: transfers peptidoglycan precursor phospho-MurNAc-pentapeptide from UDP-MurNAc-pentapeptide onto the lipid carrier undecaprenyl phosphate, yielding undecaprenyl-pyrophosphoryl-MurNAc-pentapeptide, known as lipid I. In Caulobacter vibrioides (strain NA1000 / CB15N) (Caulobacter crescentus), this protein is Phospho-N-acetylmuramoyl-pentapeptide-transferase.